The primary structure comprises 124 residues: Large ribosomal subunit protein bL20 (124 aa).

The protein belongs to the bacterial ribosomal protein bL20 family.

In terms of biological role, binds directly to 23S ribosomal RNA and is necessary for the in vitro assembly process of the 50S ribosomal subunit. It is not involved in the protein synthesizing functions of that subunit. The polypeptide is Large ribosomal subunit protein bL20 (Gemmatimonas aurantiaca (strain DSM 14586 / JCM 11422 / NBRC 100505 / T-27)).